Consider the following 55-residue polypeptide: ATP synthase small subunit 6, mitochondrial (55 aa).

Residues 1–15 constitute a mitochondrion transit peptide; that stretch reads MRQFDPWPVFFRREW. Residues 20–39 traverse the membrane as a helical segment; it reads PFLVGFAVTGAIITKMSLGF.

It belongs to the ATPase 6 subunit family.

The protein resides in the mitochondrion inner membrane. Mitochondrial membrane ATP synthase (F(1)F(0) ATP synthase or Complex V) produces ATP from ADP in the presence of a proton gradient across the membrane which is generated by electron transport complexes of the respiratory chain. F-type ATPases consist of two structural domains, F(1) - containing the extramembraneous catalytic core and F(0) - containing the membrane proton channel, linked together by a central stalk and a peripheral stalk. During catalysis, ATP synthesis in the catalytic domain of F(1) is coupled via a rotary mechanism of the central stalk subunits to proton translocation. Part of the complex F(0) domain. Confers tolerance to several abiotic stresses (e.g. salt, mannitol, drought, oxidative and cold stresses), probably by providing additional energy needed for cell homeostasis. The sequence is that of ATP synthase small subunit 6, mitochondrial from Solanum tuberosum (Potato).